Reading from the N-terminus, the 2042-residue chain is Protein mini spindles (2042 aa).

2 TOG regions span residues 1–229 (MAED…VEPS) and 267–505 (MDLL…KVAG). The segment at 1 to 505 (MAEDTEYKKL…KAEIKIKVAG (505 aa)) is binds tubulin. 2 promotes microtubule polymerization regions span residues 1–516 (MAED…ASAP) and 581–1080 (TPEE…EKAR). HEAT repeat units lie at residues 120-157 (EKQE…EFGH), 160-197 (IGVK…WIGA), 270-311 (LDPV…DHPK), 315-353 (GEYG…GLAK), 357-394 (NYAS…STSL), 396-433 (AQQE…TALN), and 440-478 (LTTS…VTPL). An association with microtubule lattice region spans residues 498–821 (EIKIKVAGPK…PKPVRGVQRS (324 aa)). Positions 506–572 (PKKETRPASA…PTAALKAGGK (67 aa)) are disordered. The span at 513–531 (ASAPTAKAAAPAKTVAGSV) shows a compositional bias: low complexity. The interval 581 to 814 (TPEELQEKSE…KNVGEKPPKP (234 aa)) is TOG 3. HEAT repeat units follow at residues 587–624 (EKSE…SGFD), 625–662 (AKQA…IIRS), 672–710 (TTVD…LEYV), and 745–782 (LQPK…YMGK). The tract at residues 804–849 (DKNVGEKPPKPVRGVQRSSGGTAGNSPDNEDDDGGAAGEEEPINMA) is disordered. Over residues 819 to 830 (QRSSGGTAGNSP) the composition is skewed to polar residues. Acidic residues predominate over residues 831–845 (DNEDDDGGAAGEEEP). 2 TOG regions span residues 849–1087 (ADLL…PVKP) and 1179–1415 (TELL…KPTP). HEAT repeat units lie at residues 856 to 893 (DIAP…EARL), 896 to 933 (PSIG…AMGA), 937 to 974 (NHVR…KGGY), and 1017 to 1054 (EDIH…HLGF). The tract at residues 1083 to 1140 (LPVKPLPKGKHQAPIPEEPKLKTVRGGGAGGAPGIQKSATARVAGGQDKQVPARKKDE) is disordered. The tract at residues 1099–1428 (EEPKLKTVRG…VDVPAPQRHD (330 aa)) is association with microtubule lattice. HEAT repeat units follow at residues 1205-1242 (RYHL…RFYD), 1272-1309 (NEGS…VFPF), 1311-1344 (KVFG…SYGM), and 1346-1383 (ICPQ…LSGE). Disordered stretches follow at residues 1407–1455 (AKKT…TFDQ) and 1940–1959 (NAGS…NGPD). A compositionally biased stretch (polar residues) spans 1940-1957 (NAGSTQDNRTDVNYQNNG).

Belongs to the TOG/XMAP215 family. As to quaternary structure, interacts with tacc, dgt6. Interacts with mv. Interacts with Patronin.

It localises to the cytoplasm. It is found in the cytoskeleton. Its subcellular location is the microtubule organizing center. The protein localises to the centrosome. The protein resides in the spindle. It localises to the perinuclear region. Functionally, binds to the plus end of microtubules and regulates microtubule dynamics and microtubule organization. Function in neurons is essential for adult survival, and is important for climbing behavior and activity. Promotes cytoplasmic microtubule nucleation and elongation. May act as a microtubule antipause factor that rapidly catalyzes the transition from pause to either growth or shrinkage. Involved in mitotic spindle elongation. Involved in the establishment of cell polarity and mitotic spindle orientation in neuroblasts. Required for maintaining the bipolarity of acentrosomal meiotic spindles; the function is dependent on tacc and involves ncd. Involved in oocyte microtubule cytoskeleton organization and bicoid mRNA localization. Seems to be involved in elongation of kinetochore-derived microtubule fibers. In fat body cells, essential component of perinuclear non-centrosomal microtubule-organizing centers (ncMTOCs) which function to accommodate the organization of microtubule (MT) networks to control nuclear positioning and dynein motor-based retrograde endosomal trafficking. Within the ncMTOCs, Msp300 and shot anchors the ncMTOC at the nuclear surface and recruits the MT minus-end regulators Patronin and Nin for assembly, anchoring and/or stabilization of circumferential and radial MTs at the ncMTOCs. Patronin, and perhaps Nin, then recruits msps to the ncMTOC where it is required for the gamma-tubulin-independent elongation and assembly of radial MTs. In Drosophila melanogaster (Fruit fly), this protein is Protein mini spindles (msps).